A 940-amino-acid polypeptide reads, in one-letter code: Fibronectin-binding protein B (940 aa).

Residues Met1–Ala36 form the signal peptide. Residues Ala36–Leu111 are disordered. The span at Ser38–Thr92 shows a compositional bias: polar residues. Positions Thr162–Lys480 are fibrinogen/elastin/tropoelastin-binding. 3 disordered regions span residues Leu676–Asp746, Ile764–Val878, and Val892–Leu918. The stretch at Gly681–His718 is one D-1 repeat. The D-2 repeat unit spans residues Gly719–His756. The D-3 repeat unit spans residues Gly757–Ser795. Residues Ile764–Pro774 show a composition bias toward basic and acidic residues. Residues Pro792–Gln802 show a composition bias toward polar residues. One copy of the D-4; truncated repeat lies at Gly796 to Pro814. The span at Pro811–Pro860 shows a compositional bias: pro residues. WR repeat units follow at residues Pro815 to Thr828, Pro829 to Thr842, and Pro857 to Lys870. Residues Leu904 to Gly908 carry the LPXTG sorting signal motif. Pentaglycyl murein peptidoglycan amidated threonine is present on Thr907. A propeptide spans Gly908–Ala940 (removed by sortase).

In terms of assembly, interacts with host PLG; this interaction provides active plasmin on the surface of bacteria cells. Interacts with host histones.

The protein localises to the secreted. It is found in the cell wall. Its function is as follows. Multifunctional protein which promotes bacterial attachment to fibrinogen, elastin and fibronectin. Also promotes the accumulation phase and the primary attachment phase of biofilm formation. In addition, protects against the antimicrobial activity of histones. Mechanistically, captures histones and prevents them from reaching the bacterial membrane and simultaneously binds plasminogen, thereby promoting its conversion to plasmin to destroy the bound histones. The protein is Fibronectin-binding protein B of Staphylococcus aureus (strain USA300).